We begin with the raw amino-acid sequence, 883 residues long: EEF1AKMT4-ECE2 readthrough transcript protein (883 aa).

The tract at residues 1–160 is methyltransferase-like region; that stretch reads MASPGAGRAP…VHTVDQVLSE (160 aa). Residues 1–178 are Cytoplasmic-facing; that stretch reads MASPGAGRAP…QLLGSRTQLE (178 aa). S-adenosyl-L-methionine-binding residues include Trp-26 and Tyr-30. Tyr-39 bears the Phosphotyrosine mark. S-adenosyl-L-methionine contacts are provided by residues Trp-41, Gly-66, 88 to 89, 113 to 114, and Lys-130; these read DY and DV. A helical membrane pass occupies residues 179-199; that stretch reads LVLAGASLLLAALLLGCLVAL. Residues 200 to 883 are Lumenal-facing; it reads GVQYHRDPSH…MNPGQLCEVW (684 aa). A Peptidase M13 domain is found at 211–883; the sequence is TCLTEACIRV…MNPGQLCEVW (673 aa). 5 cysteine pairs are disulfide-bonded: Cys-212–Cys-217, Cys-235–Cys-868, Cys-243–Cys-828, Cys-299–Cys-548, and Cys-757–Cys-880. Residues Asn-279, Asn-283, Asn-324, Asn-384, Asn-429, Asn-496, and Asn-652 are each glycosylated (N-linked (GlcNAc...) asparagine). Residue His-720 participates in Zn(2+) binding. Glu-721 is an active-site residue. His-724 is a Zn(2+) binding site. Residues Asn-745 and Asn-753 are each glycosylated (N-linked (GlcNAc...) asparagine). Glu-780 is a binding site for Zn(2+). Residue Asp-784 is the Proton donor of the active site.

This sequence in the N-terminal section; belongs to the methyltransferase superfamily. The protein in the C-terminal section; belongs to the peptidase M13 family. Zn(2+) is required as a cofactor.

The protein localises to the golgi apparatus membrane. It localises to the cytoplasmic vesicle. Its subcellular location is the secretory vesicle membrane. The enzyme catalyses Hydrolysis of the 21-Trp-|-Val-22 bond in big endothelin to form endothelin 1.. Its activity is regulated as follows. Inhibited by phosphoramidon. Its function is as follows. Converts big endothelin-1 to endothelin-1. May also have methyltransferase activity. May play a role in amyloid-beta processing. This chain is EEF1AKMT4-ECE2 readthrough transcript protein, found in Homo sapiens (Human).